A 212-amino-acid polypeptide reads, in one-letter code: Thiamine-phosphate synthase (212 aa).

4-amino-2-methyl-5-(diphosphooxymethyl)pyrimidine contacts are provided by residues 39-43 (QLREK) and N71. The Mg(2+) site is built by D72 and D91. S110 is a binding site for 4-amino-2-methyl-5-(diphosphooxymethyl)pyrimidine. 137 to 139 (TPT) is a 2-[(2R,5Z)-2-carboxy-4-methylthiazol-5(2H)-ylidene]ethyl phosphate binding site. K140 contributes to the 4-amino-2-methyl-5-(diphosphooxymethyl)pyrimidine binding site. G168 provides a ligand contact to 2-[(2R,5Z)-2-carboxy-4-methylthiazol-5(2H)-ylidene]ethyl phosphate.

It belongs to the thiamine-phosphate synthase family. Mg(2+) is required as a cofactor.

It carries out the reaction 2-[(2R,5Z)-2-carboxy-4-methylthiazol-5(2H)-ylidene]ethyl phosphate + 4-amino-2-methyl-5-(diphosphooxymethyl)pyrimidine + 2 H(+) = thiamine phosphate + CO2 + diphosphate. It catalyses the reaction 2-(2-carboxy-4-methylthiazol-5-yl)ethyl phosphate + 4-amino-2-methyl-5-(diphosphooxymethyl)pyrimidine + 2 H(+) = thiamine phosphate + CO2 + diphosphate. The enzyme catalyses 4-methyl-5-(2-phosphooxyethyl)-thiazole + 4-amino-2-methyl-5-(diphosphooxymethyl)pyrimidine + H(+) = thiamine phosphate + diphosphate. It functions in the pathway cofactor biosynthesis; thiamine diphosphate biosynthesis; thiamine phosphate from 4-amino-2-methyl-5-diphosphomethylpyrimidine and 4-methyl-5-(2-phosphoethyl)-thiazole: step 1/1. In terms of biological role, condenses 4-methyl-5-(beta-hydroxyethyl)thiazole monophosphate (THZ-P) and 2-methyl-4-amino-5-hydroxymethyl pyrimidine pyrophosphate (HMP-PP) to form thiamine monophosphate (TMP). This Acidothermus cellulolyticus (strain ATCC 43068 / DSM 8971 / 11B) protein is Thiamine-phosphate synthase.